Here is a 258-residue protein sequence, read N- to C-terminus: 1-(5-phosphoribosyl)-5-[(5-phosphoribosylamino)methylideneamino] imidazole-4-carboxamide isomerase 2 (258 aa).

The active-site Proton acceptor is the Asp-14. Asp-140 functions as the Proton donor in the catalytic mechanism.

Belongs to the HisA/HisF family.

The protein resides in the cytoplasm. The catalysed reaction is 1-(5-phospho-beta-D-ribosyl)-5-[(5-phospho-beta-D-ribosylamino)methylideneamino]imidazole-4-carboxamide = 5-[(5-phospho-1-deoxy-D-ribulos-1-ylimino)methylamino]-1-(5-phospho-beta-D-ribosyl)imidazole-4-carboxamide. It participates in amino-acid biosynthesis; L-histidine biosynthesis; L-histidine from 5-phospho-alpha-D-ribose 1-diphosphate: step 4/9. The chain is 1-(5-phosphoribosyl)-5-[(5-phosphoribosylamino)methylideneamino] imidazole-4-carboxamide isomerase 2 (hisA2) from Photorhabdus laumondii subsp. laumondii (strain DSM 15139 / CIP 105565 / TT01) (Photorhabdus luminescens subsp. laumondii).